The following is a 121-amino-acid chain: Large ribosomal subunit protein bL20 (121 aa).

It belongs to the bacterial ribosomal protein bL20 family.

Its function is as follows. Binds directly to 23S ribosomal RNA and is necessary for the in vitro assembly process of the 50S ribosomal subunit. It is not involved in the protein synthesizing functions of that subunit. This Dinoroseobacter shibae (strain DSM 16493 / NCIMB 14021 / DFL 12) protein is Large ribosomal subunit protein bL20.